A 220-amino-acid chain; its full sequence is NADH-quinone oxidoreductase subunit I (220 aa).

2 consecutive 4Fe-4S ferredoxin-type domains span residues 71 to 102 and 112 to 141; these read LQRL…IITH and DSYT…MGNR. Positions 82, 85, 88, 92, 121, 124, 127, and 131 each coordinate [4Fe-4S] cluster. The tract at residues 187-220 is disordered; the sequence is MQATPLDYVQEPSKEESQEETPTNPESNKGDENV.

This sequence belongs to the complex I 23 kDa subunit family. NDH-1 is composed of 14 different subunits. Subunits NuoA, H, J, K, L, M, N constitute the membrane sector of the complex. The cofactor is [4Fe-4S] cluster.

It localises to the cell inner membrane. The enzyme catalyses a quinone + NADH + 5 H(+)(in) = a quinol + NAD(+) + 4 H(+)(out). Functionally, NDH-1 shuttles electrons from NADH, via FMN and iron-sulfur (Fe-S) centers, to quinones in the respiratory chain. The immediate electron acceptor for the enzyme in this species is believed to be ubiquinone. Couples the redox reaction to proton translocation (for every two electrons transferred, four hydrogen ions are translocated across the cytoplasmic membrane), and thus conserves the redox energy in a proton gradient. The sequence is that of NADH-quinone oxidoreductase subunit I from Helicobacter pylori (strain ATCC 700392 / 26695) (Campylobacter pylori).